A 365-amino-acid chain; its full sequence is tRNA N6-adenosine threonylcarbamoyltransferase (365 aa).

Residues histidine 119 and histidine 123 each contribute to the Fe cation site. Substrate is bound by residues 141 to 145 (LVSGG), aspartate 174, glycine 187, and asparagine 289. Aspartate 317 is a binding site for Fe cation. Residues 342 to 365 (ARPRWPLDSKSPAMLGSGKKGAKA) form a disordered region.

It belongs to the KAE1 / TsaD family. Requires Fe(2+) as cofactor.

The protein localises to the cytoplasm. It catalyses the reaction L-threonylcarbamoyladenylate + adenosine(37) in tRNA = N(6)-L-threonylcarbamoyladenosine(37) in tRNA + AMP + H(+). Required for the formation of a threonylcarbamoyl group on adenosine at position 37 (t(6)A37) in tRNAs that read codons beginning with adenine. Is involved in the transfer of the threonylcarbamoyl moiety of threonylcarbamoyl-AMP (TC-AMP) to the N6 group of A37, together with TsaE and TsaB. TsaD likely plays a direct catalytic role in this reaction. The chain is tRNA N6-adenosine threonylcarbamoyltransferase from Roseobacter denitrificans (strain ATCC 33942 / OCh 114) (Erythrobacter sp. (strain OCh 114)).